The following is a 337-amino-acid chain: Anthranilate phosphoribosyltransferase (337 aa).

5-phospho-alpha-D-ribose 1-diphosphate is bound by residues glycine 80, 83–84, threonine 88, 90–93, 108–116, and serine 120; these read GD, NIST, and KHGNRAVSS. Glycine 80 serves as a coordination point for anthranilate. Serine 92 contacts Mg(2+). Asparagine 111 lines the anthranilate pocket. Arginine 166 is an anthranilate binding site. Mg(2+) is bound by residues aspartate 224 and glutamate 225.

This sequence belongs to the anthranilate phosphoribosyltransferase family. In terms of assembly, homodimer. The cofactor is Mg(2+).

It carries out the reaction N-(5-phospho-beta-D-ribosyl)anthranilate + diphosphate = 5-phospho-alpha-D-ribose 1-diphosphate + anthranilate. Its pathway is amino-acid biosynthesis; L-tryptophan biosynthesis; L-tryptophan from chorismate: step 2/5. Catalyzes the transfer of the phosphoribosyl group of 5-phosphorylribose-1-pyrophosphate (PRPP) to anthranilate to yield N-(5'-phosphoribosyl)-anthranilate (PRA). This is Anthranilate phosphoribosyltransferase from Anaeromyxobacter dehalogenans (strain 2CP-C).